The sequence spans 199 residues: Prolactin-2 (199 aa).

3 disulfides stabilise this stretch: Cys4–Cys11, Cys58–Cys174, and Cys191–Cys199.

This sequence belongs to the somatotropin/prolactin family.

It localises to the secreted. This chain is Prolactin-2, found in Alligator mississippiensis (American alligator).